Consider the following 33-residue polypeptide: Dermaseptin-H8 (33 aa).

Leucine amide is present on leucine 33.

In terms of tissue distribution, expressed by the skin glands.

The protein resides in the secreted. In terms of biological role, has antimicrobial activity. In Pithecopus hypochondrialis (Orange-legged leaf frog), this protein is Dermaseptin-H8.